An 81-amino-acid chain; its full sequence is Small ribosomal subunit protein bS16 (81 aa).

This sequence belongs to the bacterial ribosomal protein bS16 family.

This is Small ribosomal subunit protein bS16 from Caldicellulosiruptor saccharolyticus (strain ATCC 43494 / DSM 8903 / Tp8T 6331).